We begin with the raw amino-acid sequence, 309 residues long: Ribonuclease Z (309 aa).

Zn(2+)-binding residues include His63, His65, Asp67, His68, His145, Asp216, and His274. Asp67 (proton acceptor) is an active-site residue.

The protein belongs to the RNase Z family. Homodimer. Requires Zn(2+) as cofactor.

The enzyme catalyses Endonucleolytic cleavage of RNA, removing extra 3' nucleotides from tRNA precursor, generating 3' termini of tRNAs. A 3'-hydroxy group is left at the tRNA terminus and a 5'-phosphoryl group is left at the trailer molecule.. Functionally, zinc phosphodiesterase, which displays some tRNA 3'-processing endonuclease activity. Probably involved in tRNA maturation, by removing a 3'-trailer from precursor tRNA. The sequence is that of Ribonuclease Z from Streptococcus thermophilus (strain CNRZ 1066).